Reading from the N-terminus, the 689-residue chain is Beta-galactosidase Pbg (689 aa).

Residue R118 participates in substrate binding. A Zn(2+)-binding site is contributed by C122. N156 serves as a coordination point for substrate. E157 acts as the Proton donor in catalysis. Zn(2+) contacts are provided by C162, C164, and C167. The active-site Nucleophile is the E318. Substrate contacts are provided by residues W326 and 366–369 (EKFH).

The protein belongs to the glycosyl hydrolase 42 family.

It catalyses the reaction Hydrolysis of terminal non-reducing beta-D-galactose residues in beta-D-galactosides.. This Clostridium perfringens (strain ATCC 13124 / DSM 756 / JCM 1290 / NCIMB 6125 / NCTC 8237 / Type A) protein is Beta-galactosidase Pbg.